A 320-amino-acid chain; its full sequence is Cytochrome f (320 aa).

Residues 1-35 form the signal peptide; sequence MQNRNTFSWVKDQMSRFISVSIMIYVITRTSISNA. Residues Tyr-36, Cys-56, Cys-59, and His-60 each contribute to the heme site. The chain crosses the membrane as a helical span at residues 286–306; it reads VQGLLFFFASVILAQIFLVLK.

The protein belongs to the cytochrome f family. As to quaternary structure, the 4 large subunits of the cytochrome b6-f complex are cytochrome b6, subunit IV (17 kDa polypeptide, petD), cytochrome f and the Rieske protein, while the 4 small subunits are PetG, PetL, PetM and PetN. The complex functions as a dimer. It depends on heme as a cofactor.

The protein localises to the plastid. Its subcellular location is the chloroplast thylakoid membrane. Component of the cytochrome b6-f complex, which mediates electron transfer between photosystem II (PSII) and photosystem I (PSI), cyclic electron flow around PSI, and state transitions. This chain is Cytochrome f, found in Ceratophyllum demersum (Rigid hornwort).